Consider the following 877-residue polypeptide: MRMSAGLSLLIPLWGRTFLLLLSVAVTQSRWPSEPSDAVRDWENQLEASMHSVLSDLHEAVPTVVGIPDGTAVVGRSFRVTIPTDLIASGGEIIKVSAAGKEALPSWLHWDPQSHTLEGLPLDTDKGVHYISVSAARLGANGSHVPQTSSVFSIEVYPEDHSEPQSVRAASPDPGEVVSSVCAADEPVTVLTVILDADLTKMIPKQRLDLLQRMQSFSEVELHNMKLVPVVNNRLFDMSAFMAGPGNAKKVIENGALLSWKLGCSLNQNSVPDIHGVEVPAREGAMSAQLGYPVVGWHIANKKPPLPKRIRRQIHATPTPVTAIGPPTTAIQEPPSRIVPTPTSPAIAPPTETMAPPVRDPVPGKPTVTIRTRGAIFQTPTLGPIQPTRVSEAGTTVPGHIRPTMTIPGYLEPTAVATPPTPTTKNPRVSXPTKKPRTPRPVPRVTTKAPITRLETASPPTRIRTTTSGLPRGEPNQRPELKNHIDRVDAWVGTYFEVKIPSDTFYDNEDTTTDKLKLTLKLREQQLVGVKSWVQFNSNSQLMYGLPDSSHVGKHEYFMHATDKGGLSAVDAFEIHVHRRPQGDRAPARFTAKFVGDPAPVVNDIHKKIALVKKLAFAFGDRNCSTITLQNITRGSIVVEWTNNTLPLEPCPKEQITGLSRRIAEDDGKPRAAFSNALEPDFKAMSIAVTGSGSCRHLQFVPVAPPKRVPSEAPPTEVPDRDPEKSSEDDVYLHTVIPAVVVAAILLIAGIIAMICYRKKRKGKLTLEDQATFIKKGVPIIFADELDDSKPPPSSSMPLILQEEKAPLPPPEYPNQSVPETTPLNQDTVGEYTPLRDEDPNAPPYQPPPPFTAPMEGKGSRPKNMTPYRSPPPYVPP.

Positions 1–29 are cleaved as a signal peptide; that stretch reads MRMSAGLSLLIPLWGRTFLLLLSVAVTQS. The tract at residues 30–408 is required for laminin recognition; sequence RWPSEPSDAV…GHIRPTMTIP (379 aa). An O-glycosylated at one site region spans residues 49–71; sequence SMHSVLSDLHEAVPTVVGIPDGT. Asn-141 carries N-linked (GlcNAc...) asparagine glycosylation. A disulfide bridge links Cys-182 with Cys-264. The mucin-like domain stretch occupies residues 316–468; sequence ATPTPVTAIG…PPTRIRTTTS (153 aa). 3 O-linked (Man6P...) threonine glycosylation sites follow: Thr-317, Thr-319, and Thr-379. 2 disordered regions span residues 380–444 and 458–480; these read PTLG…PVPR and SPPTRIRTTTSGLPRGEPNQRPE. Low complexity predominate over residues 413-433; the sequence is PTAVATPPTPTTKNPRVSXPT. Positions 446-468 are O-glycosylated at seven sites with GalNAc; sequence TTKAPITRLETASPPTRIRTTTS. One can recognise a Peptidase S72 domain in the interval 585 to 694; the sequence is RAPARFTAKF…MSIAVTGSGS (110 aa). 3 N-linked (GlcNAc...) asparagine glycosylation sites follow: Asn-623, Asn-631, and Asn-643. The cysteines at positions 651 and 695 are disulfide-linked. The segment covering 706–717 has biased composition (pro residues); sequence PKRVPSEAPPTE. Residues 706-727 form a disordered region; it reads PKRVPSEAPPTEVPDRDPEKSS. Residues 718–727 show a composition bias toward basic and acidic residues; that stretch reads VPDRDPEKSS. The helical transmembrane segment at 732 to 757 threads the bilayer; that stretch reads YLHTVIPAVVVAAILLIAGIIAMICY. Positions 758–764 match the Nuclear localization signal motif; that stretch reads RKKRKGK. Residue Thr-772 is modified to Phosphothreonine. The required for interaction with CAV3 stretch occupies residues 801–877; the sequence is LQEEKAPLPP…YRSPPPYVPP (77 aa). The segment at 805-877 is disordered; it reads KAPLPPPEYP…YRSPPPYVPP (73 aa). A compositionally biased stretch (polar residues) spans 814-828; that stretch reads PNQSVPETTPLNQDT. Positions 841 to 852 are enriched in pro residues; the sequence is NAPPYQPPPPFT. The segment at 862–877 is required for binding DMD and UTRN; the sequence is PKNMTPYRSPPPYVPP. Positions 871–874 match the PPXY motif motif; the sequence is PPPY. Phosphotyrosine; by SRC is present on Tyr-874.

As to quaternary structure, monomer. Heterodimer of alpha- and beta-dystroglycan subunits which are the central components of the dystrophin-glycoprotein complex. This complex then can form a dystrophin-associated glycoprotein complex (DGC) which is composed of three subcomplexes: a cytoplasmic complex comprised of DMD (or UTRN), DTNA and a number of syntrophins, such as SNTB1, SNTB2, SNTG1 and SNTG2, the transmembrane dystroglycan complex, and the sarcoglycan-sarcospan complex. Interacts (via the N-terminal of alphaDAG1) with LARGE1; the interaction enhances laminin binding. Interacts with SGCD. Interacts with AGR2 and AGR3. Interacts (betaDAG1) with DMD; the interaction is inhibited by phosphorylation on the PPXY motif. Interacts (betaDAG1, via its PPXY motif) with UTRN (via its WWW and ZZ domains); the interaction is inhibited by phosphorylation on the PPXY motif. Interacts (betaDAG1, via its phosphorylated PPXY motif) with the SH2 domain-containing proteins, FYN, CSK, NCK and SHC. Interacts (betaDAG1) with CAV3 (via a central WW-like domain); the interaction disrupts the binding of DMD. BetaDAG1 directly interacts with ANK3, but not with ANK2; this interaction does not interfere with DMD-binding and is required for retention at costameres. Identified in a dystroglycan complex that contains at least PRX, DRP2, UTRN, DMD and DAG1. Interacts with POMGNT1. BetaDAG1 interacts with CD93. In terms of processing, O-glycosylated. POMGNT1 catalyzes the initial addition of N-acetylglucosamine, giving rise to the GlcNAc(beta1-2)Man(alpha1-)O-Ser/Thr moiety and thus providing the necessary basis for the addition of further carbohydrate moieties. Heavily O-glycosylated comprising of up to two thirds of its mass and the carbohydrate composition differs depending on tissue type. Mucin-type O-glycosylation is important for ligand binding activity. O-mannosylation of alpha-DAG1 is found in high abundance in both brain and muscle where the most abundant glycan is Sia-alpha-2-3-Gal-beta-1-4-Glc-NAc-beta-1-2-Man. In muscle, glycosylation on Thr-317, Thr-319 and Thr-379 by a phosphorylated O-mannosyl glycan with the structure 2-(N-acetylamido)-2-deoxygalactosyl-beta-1,3-2-(N-acetylamido)-2-deoxyglucosyl-beta-1,4-6-phosphomannose is mediated by like-acetylglucosaminyltransferase (LARGE1) protein amd is required for laminin binding. O-glycosylated in the N-terminal region with a core 1 or possibly core 8 glycan. The brain form displays a unique glycosylation pattern which is absent in other tissues; this form shows enhanced binding to laminin LAMA5 compared to the skeletal muscle form. Post-translationally, N-glycosylated. Autolytic cleavage produces the alpha and beta subunits. In cutaneous cells, as well as in certain pathological conditions, shedding of beta-dystroglycan can occur releasing a peptide of about 30 kDa. In terms of processing, SRC-mediated phosphorylation of the PPXY motif of the beta subunit recruits SH2 domain-containing proteins, but inhibits binding to WWW domain-containing proteins, DMD and UTRN. This phosphorylation also inhibits nuclear entry.

The protein resides in the secreted. Its subcellular location is the extracellular space. The protein localises to the cell membrane. It is found in the cytoplasm. It localises to the cytoskeleton. The protein resides in the nucleus. Its subcellular location is the nucleoplasm. The protein localises to the sarcolemma. It is found in the postsynaptic cell membrane. Functionally, the dystroglycan complex is involved in a number of processes including laminin and basement membrane assembly, sarcolemmal stability, cell survival, peripheral nerve myelination, nodal structure, cell migration, and epithelial polarization. Its function is as follows. Extracellular peripheral glycoprotein that acts as a receptor for extracellular matrix proteins containing laminin-G domains. Receptor for laminin-2 (LAMA2) and agrin in peripheral nerve Schwann cells. Also acts as a receptor for laminin LAMA5. Transmembrane protein that plays important roles in connecting the extracellular matrix to the cytoskeleton. Acts as a cell adhesion receptor in both muscle and non-muscle tissues. Receptor for both DMD and UTRN and, through these interactions, scaffolds axin to the cytoskeleton. Also functions in cell adhesion-mediated signaling and implicated in cell polarity. This is Dystroglycan 1 from Sus scrofa (Pig).